Here is a 516-residue protein sequence, read N- to C-terminus: Flavin-dependent halogenase armH2 (516 aa).

Residues Gly-16, Ala-19, and Glu-49 each coordinate FAD. Residues Ser-328 and Gly-329 each coordinate chloride. Ile-330 contributes to the FAD binding site. Residues 440 to 475 (PQANGNGAAKQDAVPAPIPVALSSGAGPEKDAKRRE) are disordered.

This sequence belongs to the flavin-dependent halogenase family.

It catalyses the reaction melleolide F + FADH2 + chloride + O2 = 6'-chloromelleolide F + FAD + 2 H2O + H(+). Flavin-dependent halogenase involved in the biosynthesis of melleolides, a range of antifungal and phytotoxic polyketide derivatives composed of an orsellinic acid (OA) moiety esterified to various sesquiterpene alcohols. The halogenase catalyzes the transfer of a single chlorine atom to the melleolide backbone, resulting in a 6'-chloromelleolide product. The enzyme acts on free substrate and does not depend on carrier-protein-dependent acceptor molecules. The chain is Flavin-dependent halogenase armH2 from Armillaria mellea (Honey mushroom).